The sequence spans 186 residues: Protein GrpE (186 aa).

A compositionally biased stretch (polar residues) spans 1-15 (MADEQQTLDQQTPEQ). Residues 1–20 (MADEQQTLDQQTPEQPTGAA) are disordered.

This sequence belongs to the GrpE family. In terms of assembly, homodimer.

The protein resides in the cytoplasm. Functionally, participates actively in the response to hyperosmotic and heat shock by preventing the aggregation of stress-denatured proteins, in association with DnaK and GrpE. It is the nucleotide exchange factor for DnaK and may function as a thermosensor. Unfolded proteins bind initially to DnaJ; upon interaction with the DnaJ-bound protein, DnaK hydrolyzes its bound ATP, resulting in the formation of a stable complex. GrpE releases ADP from DnaK; ATP binding to DnaK triggers the release of the substrate protein, thus completing the reaction cycle. Several rounds of ATP-dependent interactions between DnaJ, DnaK and GrpE are required for fully efficient folding. The protein is Protein GrpE of Pseudomonas aeruginosa (strain LESB58).